Here is a 189-residue protein sequence, read N- to C-terminus: MLSMSNDRADTGGRILRAAASCVVDYGVDRVTLAEIARRAGVSRPTVYRRWPDTRSIMASMLTSHIAAVLREVPLDGDDREALVKQIVAVADRLRGDDLIMSVMHSELARVYITERLGTSQQVLIEGLAARLTVAQRSGSVRSGDARRLATMVLLIAQSTIQSADIVDSILDSAALATELTHALNGYLC.

In terms of domain architecture, HTH tetR-type spans 9-69; sequence ADTGGRILRA…SMLTSHIAAV (61 aa). Positions 32 to 51 form a DNA-binding region, H-T-H motif; the sequence is TLAEIARRAGVSRPTVYRRW.

This is an uncharacterized protein from Mycobacterium bovis (strain ATCC BAA-935 / AF2122/97).